A 367-amino-acid chain; its full sequence is tRNA-specific 2-thiouridylase MnmA (367 aa).

ATP is bound by residues 10-17 (AMSGGVDS) and Met-36. Catalysis depends on Cys-106, which acts as the Nucleophile. Cysteines 106 and 204 form a disulfide. Residue Gly-130 coordinates ATP. Positions 154–156 (KDQ) are interaction with tRNA. Residue Cys-204 is the Cysteine persulfide intermediate of the active site. The interval 310–311 (RY) is interaction with tRNA.

This sequence belongs to the MnmA/TRMU family.

Its subcellular location is the cytoplasm. It carries out the reaction S-sulfanyl-L-cysteinyl-[protein] + uridine(34) in tRNA + AH2 + ATP = 2-thiouridine(34) in tRNA + L-cysteinyl-[protein] + A + AMP + diphosphate + H(+). Its function is as follows. Catalyzes the 2-thiolation of uridine at the wobble position (U34) of tRNA, leading to the formation of s(2)U34. The chain is tRNA-specific 2-thiouridylase MnmA from Desulforamulus reducens (strain ATCC BAA-1160 / DSM 100696 / MI-1) (Desulfotomaculum reducens).